The chain runs to 478 residues: Aspartyl/glutamyl-tRNA(Asn/Gln) amidotransferase subunit B 1 (478 aa).

The protein belongs to the GatB/GatE family. GatB subfamily. As to quaternary structure, heterotrimer of A, B and C subunits.

It catalyses the reaction L-glutamyl-tRNA(Gln) + L-glutamine + ATP + H2O = L-glutaminyl-tRNA(Gln) + L-glutamate + ADP + phosphate + H(+). The enzyme catalyses L-aspartyl-tRNA(Asn) + L-glutamine + ATP + H2O = L-asparaginyl-tRNA(Asn) + L-glutamate + ADP + phosphate + 2 H(+). Allows the formation of correctly charged Asn-tRNA(Asn) or Gln-tRNA(Gln) through the transamidation of misacylated Asp-tRNA(Asn) or Glu-tRNA(Gln) in organisms which lack either or both of asparaginyl-tRNA or glutaminyl-tRNA synthetases. The reaction takes place in the presence of glutamine and ATP through an activated phospho-Asp-tRNA(Asn) or phospho-Glu-tRNA(Gln). The sequence is that of Aspartyl/glutamyl-tRNA(Asn/Gln) amidotransferase subunit B 1 from Syntrophus aciditrophicus (strain SB).